The following is a 618-amino-acid chain: Proline--tRNA ligase (618 aa).

The protein belongs to the class-II aminoacyl-tRNA synthetase family. ProS type 1 subfamily. As to quaternary structure, homodimer.

Its subcellular location is the cytoplasm. The catalysed reaction is tRNA(Pro) + L-proline + ATP = L-prolyl-tRNA(Pro) + AMP + diphosphate. Functionally, catalyzes the attachment of proline to tRNA(Pro) in a two-step reaction: proline is first activated by ATP to form Pro-AMP and then transferred to the acceptor end of tRNA(Pro). As ProRS can inadvertently accommodate and process non-cognate amino acids such as alanine and cysteine, to avoid such errors it has two additional distinct editing activities against alanine. One activity is designated as 'pretransfer' editing and involves the tRNA(Pro)-independent hydrolysis of activated Ala-AMP. The other activity is designated 'posttransfer' editing and involves deacylation of mischarged Ala-tRNA(Pro). The misacylated Cys-tRNA(Pro) is not edited by ProRS. In Streptococcus pyogenes serotype M4 (strain MGAS10750), this protein is Proline--tRNA ligase.